The chain runs to 321 residues: MSKPIVMERGVKYRDADKMALIPVKNVATEREALLRKPEWMKIKLPADSTRIQGIKAAMRKNGLHSVCEEASCPNLAECFNHGTATFMILGAICTRRCPFCDVAHGRPVAPDANEPVKLAQTIADMALRYVVITSVDRDDLRDGGAQHFADCITAIREKSPQIKIETLVPDFRGRMDRALDILTATPPDVFNHNLENVPRIYRQVRPGADYNWSLKLLERFKEAHPEIPTKSGLMVGLGETNEEIIEVMRDLRRHGVTMLTLGQYLQPSRHHLPVQRYVSPDEFDEMKAEALAMGFTHAACGPFVRSSYHADLQAKGMEVK.

7 residues coordinate [4Fe-4S] cluster: Cys68, Cys73, Cys79, Cys94, Cys98, Cys101, and Ser308. Residues 80–297 (FNHGTATFMI…KAEALAMGFT (218 aa)) form the Radical SAM core domain.

Belongs to the radical SAM superfamily. Lipoyl synthase family. [4Fe-4S] cluster serves as cofactor.

It is found in the cytoplasm. It carries out the reaction [[Fe-S] cluster scaffold protein carrying a second [4Fe-4S](2+) cluster] + N(6)-octanoyl-L-lysyl-[protein] + 2 oxidized [2Fe-2S]-[ferredoxin] + 2 S-adenosyl-L-methionine + 4 H(+) = [[Fe-S] cluster scaffold protein] + N(6)-[(R)-dihydrolipoyl]-L-lysyl-[protein] + 4 Fe(3+) + 2 hydrogen sulfide + 2 5'-deoxyadenosine + 2 L-methionine + 2 reduced [2Fe-2S]-[ferredoxin]. Its pathway is protein modification; protein lipoylation via endogenous pathway; protein N(6)-(lipoyl)lysine from octanoyl-[acyl-carrier-protein]: step 2/2. Catalyzes the radical-mediated insertion of two sulfur atoms into the C-6 and C-8 positions of the octanoyl moiety bound to the lipoyl domains of lipoate-dependent enzymes, thereby converting the octanoylated domains into lipoylated derivatives. The sequence is that of Lipoyl synthase from Escherichia coli O9:H4 (strain HS).